Here is a 327-residue protein sequence, read N- to C-terminus: Chlorophenol reductase (327 aa).

Positions 1–24 are cleaved as a signal peptide; that stretch reads MKKTLGIILSISLAFSVLALPIFA. Residues 65 to 110 enclose the LysM domain; the sequence is TYYTVVSGDFFWQIAAKHGLTIDALAKLNPQIKNVNLIFPGQKILV.

Cob(I)alamin is required as a cofactor.

It is found in the secreted. The protein resides in the cell wall. Its subcellular location is the cell membrane. Inhibited by sulfide and to a lesser extent by nitrite. Its function is as follows. Reductive dechlorination of ortho-chlorophenols. Dechlorinates in the ortho position with respect to the hydroxyl group. The sequence is that of Chlorophenol reductase from Desulfitobacterium hafniense (Desulfitobacterium frappieri).